Consider the following 228-residue polypeptide: Eukaryotic translation initiation factor 4E-2 (228 aa).

Cys130 and Cys134 are disulfide-bonded.

It belongs to the eukaryotic initiation factor 4E family. In terms of assembly, eIF4F is a multi-subunit complex, the composition of which varies with external and internal environmental conditions. It is composed of at least eIF4A, eIF4E and eIF4G. eIF4E is also known to interact with other partners. As to expression, highly expressed in all somatic tissues.

In terms of biological role, recognizes and binds the 7-methylguanosine-containing mRNA cap during an early step in the initiation of protein synthesis and facilitates ribosome binding by inducing the unwinding of the mRNAs secondary structures. All 5 eIF4E proteins bind monomethyl cap structures. Only ife-1, ife-2 and ife-5 bind trimethyl cap structures which result from trans-splicing. Translation of trimethyl cap structure mRNAs may be regulated by intracellular redox state; disulfide bonds change the width and depth of the cap-binding cavity determining selectivity to mRNA caps. Probably by regulating mRNA translation in somatic cells, negatively regulates lifespan independently of daf-2/insulin and let-363/TOR pathways. Negatively regulates resistance to oxidative stress. May play a role in embryonic development. The polypeptide is Eukaryotic translation initiation factor 4E-2 (ife-2) (Caenorhabditis elegans).